We begin with the raw amino-acid sequence, 187 residues long: Calcium and integrin-binding family member 2 (187 aa).

3 EF-hand domains span residues 66-101 (RENP…LCES), 103-138 (PREL…LTKS), and 144-179 (EVVL…APDF). Asp116, Asn118, Asp120, Asp127, Asp157, Asp159, Asp161, Lys163, and Asp168 together coordinate Ca(2+).

Monomer. Homodimer. Interacts with WHRN and MYO7A. Interacts with ITGA2B (via C-terminus cytoplasmic tail region); the interactions are stabilized/increased in a calcium and magnesium-dependent manner. Interacts with ITGA7 (via C-terminus cytoplasmic tail region); the interactions are stabilized/increased in a calcium and magnesium-dependent manner. Interacts with TMC1. Interacts with TMC2. In terms of tissue distribution, widely expressed.

The protein localises to the cytoplasm. Its subcellular location is the cell projection. It is found in the stereocilium. It localises to the photoreceptor inner segment. The protein resides in the cilium. The protein localises to the photoreceptor outer segment. Its subcellular location is the cell membrane. It is found in the sarcolemma. Calcium- and integrin-binding protein that plays a role in intracellular calcium homeostasis. Acts as an auxiliary subunit of the sensory mechanoelectrical transduction (MET) channel in hair cells. Essential for mechanoelectrical transduction (MET) currents in auditory hair cells and thereby required for hearing. Regulates the function of hair cell mechanotransduction by controlling the distribution of transmembrane channel-like proteins TMC1 and TMC2, and by regulating the function of the MET channels in hair cells. Required for the maintenance of auditory hair cell stereocilia bundle morphology and function and for hair-cell survival in the cochlea. Critical for proper photoreceptor cell maintenance and function. Plays a role in intracellular calcium homeostasis by decreasing ATP-induced calcium release. This chain is Calcium and integrin-binding family member 2 (CIB2), found in Homo sapiens (Human).